The sequence spans 155 residues: MSRRGTAEEKTAKSDPIYRNRLVNMLVNRILKHGKKSLAYQIIYRAVKKIQQKTETNPLSVLRQAIRGVTPDIAVKARRVGGSTHQVPIEIGSTQGKALAIRWLLGASRKRPGRNMAFKLSSELVDAAKGSGDAIRKKEETHKMAXANRAFAHFR.

Belongs to the universal ribosomal protein uS7 family. Part of the 30S ribosomal subunit.

It is found in the plastid. The protein resides in the chloroplast. Its function is as follows. One of the primary rRNA binding proteins, it binds directly to 16S rRNA where it nucleates assembly of the head domain of the 30S subunit. This Aristolochia macrophylla (Dutchman's pipe vine) protein is Small ribosomal subunit protein uS7c (rps7).